We begin with the raw amino-acid sequence, 180 residues long: Cell division protein ZapC (180 aa).

Belongs to the ZapC family. As to quaternary structure, interacts directly with FtsZ.

The protein localises to the cytoplasm. Functionally, contributes to the efficiency of the cell division process by stabilizing the polymeric form of the cell division protein FtsZ. Acts by promoting interactions between FtsZ protofilaments and suppressing the GTPase activity of FtsZ. The protein is Cell division protein ZapC of Vibrio vulnificus (strain CMCP6).